Consider the following 252-residue polypeptide: Triosephosphate isomerase (252 aa).

10 to 12 (NWK) provides a ligand contact to substrate. Residue His-96 is the Electrophile of the active site. Glu-168 (proton acceptor) is an active-site residue. Substrate is bound by residues Gly-174, Ser-214, and 235-236 (GG).

It belongs to the triosephosphate isomerase family. Homodimer.

Its subcellular location is the cytoplasm. The catalysed reaction is D-glyceraldehyde 3-phosphate = dihydroxyacetone phosphate. It participates in carbohydrate biosynthesis; gluconeogenesis. The protein operates within carbohydrate degradation; glycolysis; D-glyceraldehyde 3-phosphate from glycerone phosphate: step 1/1. In terms of biological role, involved in the gluconeogenesis. Catalyzes stereospecifically the conversion of dihydroxyacetone phosphate (DHAP) to D-glyceraldehyde-3-phosphate (G3P). In Lactobacillus helveticus (strain DPC 4571), this protein is Triosephosphate isomerase.